The chain runs to 270 residues: Phosphatidylglycerol--prolipoprotein diacylglyceryl transferase (270 aa).

The next 4 helical transmembrane spans lie at 19 to 39 (FPVYWYGIIIGTGVLLGLWLA), 56 to 76 (LVLIAVPIAILFARMYYVIFE), 92 to 112 (QGGLAIHGGLIGAVITGVLFA), and 116 to 136 (GLSFWKLADIAAPSILLGQAI). Arginine 138 contacts a 1,2-diacyl-sn-glycero-3-phospho-(1'-sn-glycerol). The next 3 helical transmembrane spans lie at 178–198 (HPTFLYESLWNFAGVILLLAL), 206–226 (GELFFTYLIWYSVGRFFVEGL), and 236–256 (LRIAQVMSIGLVVISIIFIIV).

This sequence belongs to the Lgt family.

The protein resides in the cell membrane. It catalyses the reaction L-cysteinyl-[prolipoprotein] + a 1,2-diacyl-sn-glycero-3-phospho-(1'-sn-glycerol) = an S-1,2-diacyl-sn-glyceryl-L-cysteinyl-[prolipoprotein] + sn-glycerol 1-phosphate + H(+). It participates in protein modification; lipoprotein biosynthesis (diacylglyceryl transfer). Catalyzes the transfer of the diacylglyceryl group from phosphatidylglycerol to the sulfhydryl group of the N-terminal cysteine of a prolipoprotein, the first step in the formation of mature lipoproteins. The protein is Phosphatidylglycerol--prolipoprotein diacylglyceryl transferase of Bacillus cereus (strain ATCC 14579 / DSM 31 / CCUG 7414 / JCM 2152 / NBRC 15305 / NCIMB 9373 / NCTC 2599 / NRRL B-3711).